Reading from the N-terminus, the 481-residue chain is Glycogen synthase (481 aa).

Position 16 (K16) interacts with ADP-alpha-D-glucose.

It belongs to the glycosyltransferase 1 family. Bacterial/plant glycogen synthase subfamily.

The catalysed reaction is [(1-&gt;4)-alpha-D-glucosyl](n) + ADP-alpha-D-glucose = [(1-&gt;4)-alpha-D-glucosyl](n+1) + ADP + H(+). The protein operates within glycan biosynthesis; glycogen biosynthesis. Functionally, synthesizes alpha-1,4-glucan chains using ADP-glucose. This Cellvibrio japonicus (strain Ueda107) (Pseudomonas fluorescens subsp. cellulosa) protein is Glycogen synthase.